Consider the following 93-residue polypeptide: Acylphosphatase (93 aa).

Residues 6–93 (RAIVTVKGLV…GEFDTFDVRY (88 aa)) form the Acylphosphatase-like domain. Active-site residues include R21 and N39.

Belongs to the acylphosphatase family.

The catalysed reaction is an acyl phosphate + H2O = a carboxylate + phosphate + H(+). The sequence is that of Acylphosphatase (acyP) from Geobacter metallireducens (strain ATCC 53774 / DSM 7210 / GS-15).